The chain runs to 52 residues: Large ribosomal subunit protein bL32c (52 aa).

The protein belongs to the bacterial ribosomal protein bL32 family.

It localises to the plastid. Its subcellular location is the chloroplast. This is Large ribosomal subunit protein bL32c from Eucalyptus globulus subsp. globulus (Tasmanian blue gum).